We begin with the raw amino-acid sequence, 522 residues long: Signal transduction histidine-protein kinase/phosphatase MprB (522 aa).

Residues 1–30 (MIRLYRPQRPPLRAPLRATPSLSLRWRVML) lie on the Cytoplasmic side of the membrane. A helical membrane pass occupies residues 31–51 (LAMSMVAMVVVLMAFAVYAVI). Topologically, residues 52 to 167 (SAALYSDIDN…PTEAVMNKLR (116 aa)) are extracellular. The helical transmembrane segment at 168–188 (WVLLIVGGVGVAVAAVAGGMV) threads the bilayer. At 189–522 (TRAGLRPVAR…SVDSQSARAR (334 aa)) the chain is on the cytoplasmic side. Residues 190-242 (RAGLRPVARLTEAAERVARTDDLRPIPVFGSDELARLTESFNLMLRALAESRE) enclose the HAMP domain. One can recognise a Histidine kinase domain in the interval 250 to 470 (DAGHELRTPL…SFYVLLPGRS (221 aa)). His253 is subject to Phosphohistidine; by autocatalysis. Residues 467–522 (PGRSLPPAGHSTPAGESETDQAEAATDPAVPVAGDTANSRESANVISVDSQSARAR) form a disordered region. The span at 502–522 (TANSRESANVISVDSQSARAR) shows a compositional bias: polar residues.

Mg(2+) serves as cofactor. Requires Mn(2+) as cofactor. Post-translationally, autophosphorylated.

It localises to the cell membrane. It catalyses the reaction ATP + protein L-histidine = ADP + protein N-phospho-L-histidine.. In terms of biological role, member of the two-component regulatory system MprB/MprA which contributes to maintaining a balance among several systems involved in stress resistance and is required for establishment and maintenance of persistent infection in the host. In response to environmental signals MprB acts both as a membrane-associated protein kinase that undergoes autophosphorylation and subsequently transfers the phosphate to MprA, and a protein phosphatase that dephosphorylates phospho-MprA. The polypeptide is Signal transduction histidine-protein kinase/phosphatase MprB (mprB) (Mycolicibacterium paratuberculosis (strain ATCC BAA-968 / K-10) (Mycobacterium paratuberculosis)).